The primary structure comprises 80 residues: Large ribosomal subunit protein bL31 (80 aa).

Cys-16, Cys-18, Cys-38, and Cys-41 together coordinate Zn(2+).

Belongs to the bacterial ribosomal protein bL31 family. Type A subfamily. In terms of assembly, part of the 50S ribosomal subunit. It depends on Zn(2+) as a cofactor.

In terms of biological role, binds the 23S rRNA. The protein is Large ribosomal subunit protein bL31 of Mycobacterium avium (strain 104).